A 246-amino-acid polypeptide reads, in one-letter code: Carboxymethylenebutenolidase homolog (246 aa).

Residues cysteine 132, aspartate 179, and histidine 212 contribute to the active site.

This sequence belongs to the dienelactone hydrolase family.

Its subcellular location is the cytoplasm. It is found in the cytosol. In terms of biological role, cysteine hydrolase. This Xenopus tropicalis (Western clawed frog) protein is Carboxymethylenebutenolidase homolog (cmbl).